Consider the following 95-residue polypeptide: Large ribosomal subunit protein bL21 (95 aa).

This sequence belongs to the bacterial ribosomal protein bL21 family. As to quaternary structure, part of the 50S ribosomal subunit. Contacts protein L20.

Its function is as follows. This protein binds to 23S rRNA in the presence of protein L20. This is Large ribosomal subunit protein bL21 from Chlorobaculum tepidum (strain ATCC 49652 / DSM 12025 / NBRC 103806 / TLS) (Chlorobium tepidum).